Consider the following 21-residue polypeptide: Putative pancreatic polypeptide 2 (21 aa).

Belongs to the NPY family.

This chain is Putative pancreatic polypeptide 2 (PPY2P), found in Homo sapiens (Human).